The primary structure comprises 1081 residues: Carbamoyl phosphate synthase large chain (1081 aa).

Residues 1–403 are carboxyphosphate synthetic domain; that stretch reads MPRRNDLNKI…SFQKALRSLE (403 aa). Positions 129, 170, 177, 209, 211, 216, 242, 243, 244, 286, and 300 each coordinate ATP. Positions 133–329 constitute an ATP-grasp 1 domain; it reads KEAMARIGVP…IAKFAAKLAV (197 aa). 3 residues coordinate Mg(2+): Gln-286, Glu-300, and Asn-302. Mn(2+) is bound by residues Gln-286, Glu-300, and Asn-302. Positions 404-553 are oligomerization domain; that stretch reads TGRFGFGCDR…STYEPEECEV (150 aa). Residues 554-944 are carbamoyl phosphate synthetic domain; it reads LPSDKPKVMI…AFAKAELGAG (391 aa). Positions 686–878 constitute an ATP-grasp 2 domain; the sequence is EKILHELEIS…LAKIASLVMS (193 aa). ATP-binding residues include Arg-722, Lys-761, Leu-763, Glu-768, Gly-794, Ile-795, His-796, Ser-797, Gln-837, and Glu-849. The Mg(2+) site is built by Gln-837, Glu-849, and Asn-851. Residues Gln-837, Glu-849, and Asn-851 each coordinate Mn(2+). Residues 945–1081 form the MGS-like domain; the sequence is VILATTGTVF…DVKALQDYLG (137 aa). The tract at residues 945-1081 is allosteric domain; that stretch reads VILATTGTVF…DVKALQDYLG (137 aa).

The protein belongs to the CarB family. Composed of two chains; the small (or glutamine) chain promotes the hydrolysis of glutamine to ammonia, which is used by the large (or ammonia) chain to synthesize carbamoyl phosphate. Tetramer of heterodimers (alpha,beta)4. Mg(2+) serves as cofactor. Requires Mn(2+) as cofactor.

It catalyses the reaction hydrogencarbonate + L-glutamine + 2 ATP + H2O = carbamoyl phosphate + L-glutamate + 2 ADP + phosphate + 2 H(+). The enzyme catalyses hydrogencarbonate + NH4(+) + 2 ATP = carbamoyl phosphate + 2 ADP + phosphate + 2 H(+). It functions in the pathway amino-acid biosynthesis; L-arginine biosynthesis; carbamoyl phosphate from bicarbonate: step 1/1. The protein operates within pyrimidine metabolism; UMP biosynthesis via de novo pathway; (S)-dihydroorotate from bicarbonate: step 1/3. Functionally, large subunit of the glutamine-dependent carbamoyl phosphate synthetase (CPSase). CPSase catalyzes the formation of carbamoyl phosphate from the ammonia moiety of glutamine, carbonate, and phosphate donated by ATP, constituting the first step of 2 biosynthetic pathways, one leading to arginine and/or urea and the other to pyrimidine nucleotides. The large subunit (synthetase) binds the substrates ammonia (free or transferred from glutamine from the small subunit), hydrogencarbonate and ATP and carries out an ATP-coupled ligase reaction, activating hydrogencarbonate by forming carboxy phosphate which reacts with ammonia to form carbamoyl phosphate. The polypeptide is Carbamoyl phosphate synthase large chain (Synechocystis sp. (strain ATCC 27184 / PCC 6803 / Kazusa)).